The chain runs to 229 residues: MTVSLTTAELAKYIDATALKADTSEADVRRLVAESREAGVKSVCINPVWVPLVAAELADSDVLTCTVIGFPLGANTSEVKAFEARQAIDAGADEVDMVIDVAAARAGDRARLVSDVRAVAEAAHADGPAGDGGALLKVIVETALLDDDAIVLACEAAVEAGADFVKTSTGFSTAGATVEHVALMRRTVGEGIGVKASGGVRTREDALAMIEAGATRIGASSALAILGSD.

The active-site Proton donor/acceptor is Asp96. Lys166 functions as the Schiff-base intermediate with acetaldehyde in the catalytic mechanism. Lys195 (proton donor/acceptor) is an active-site residue.

This sequence belongs to the DeoC/FbaB aldolase family. DeoC type 1 subfamily.

The protein resides in the cytoplasm. The catalysed reaction is 2-deoxy-D-ribose 5-phosphate = D-glyceraldehyde 3-phosphate + acetaldehyde. The protein operates within carbohydrate degradation; 2-deoxy-D-ribose 1-phosphate degradation; D-glyceraldehyde 3-phosphate and acetaldehyde from 2-deoxy-alpha-D-ribose 1-phosphate: step 2/2. In terms of biological role, catalyzes a reversible aldol reaction between acetaldehyde and D-glyceraldehyde 3-phosphate to generate 2-deoxy-D-ribose 5-phosphate. This Micrococcus luteus (strain ATCC 4698 / DSM 20030 / JCM 1464 / CCM 169 / CCUG 5858 / IAM 1056 / NBRC 3333 / NCIMB 9278 / NCTC 2665 / VKM Ac-2230) (Micrococcus lysodeikticus) protein is Deoxyribose-phosphate aldolase.